The following is a 91-amino-acid chain: DNA-binding protein HU (91 aa).

It belongs to the bacterial histone-like protein family.

Its function is as follows. Histone-like DNA-binding protein which is capable of wrapping DNA to stabilize it, and thus to prevent its denaturation under extreme environmental conditions. Also seems to act as a fortuitous virulence factor in delayed sequelae by binding to heparan sulfate-proteoglycans in the extracellular matrix of target organs and acting as a nidus for in situ immune complex formation. The polypeptide is DNA-binding protein HU (hup) (Streptococcus gordonii).